A 449-amino-acid chain; its full sequence is Na(+)/H(+) antiporter NhaA 2 (449 aa).

A run of 11 helical transmembrane segments spans residues 32–52 (IEATSGAVLLLATVVALTLSN), 87–107 (GLMTLFFFIVALEIKREVVLG), 114–134 (MVALSVVAAAGGMLVPMGLYL), 145–165 (GWGVVMPTDTAFVIGCLALLG), 174–194 (VFLLSLAVVDDLAAILVVAVG), 202–222 (TALALGAVGLVIIRGMALLGV), 233–253 (AIIWLAVNASGIHATIVGVIL), 318–338 (WVAFGVMPLFALANAGVPITI), 347–367 (LAVMAGFVLGKPIGVTAFAWL), 382–402 (WGGLVGGALLTGIGFTMALFI), and 417–437 (LGILAASVVSSVAGLTLLCAL).

Belongs to the NhaA Na(+)/H(+) (TC 2.A.33) antiporter family.

It localises to the cell inner membrane. It catalyses the reaction Na(+)(in) + 2 H(+)(out) = Na(+)(out) + 2 H(+)(in). Its function is as follows. Na(+)/H(+) antiporter that extrudes sodium in exchange for external protons. In Acidiphilium cryptum (strain JF-5), this protein is Na(+)/H(+) antiporter NhaA 2.